The sequence spans 208 residues: Ribosomal RNA large subunit methyltransferase E (208 aa).

S-adenosyl-L-methionine-binding residues include Gly-63, Trp-65, Asp-83, Asp-99, and Asp-124. Lys-164 (proton acceptor) is an active-site residue.

This sequence belongs to the class I-like SAM-binding methyltransferase superfamily. RNA methyltransferase RlmE family.

It localises to the cytoplasm. It catalyses the reaction uridine(2552) in 23S rRNA + S-adenosyl-L-methionine = 2'-O-methyluridine(2552) in 23S rRNA + S-adenosyl-L-homocysteine + H(+). Its function is as follows. Specifically methylates the uridine in position 2552 of 23S rRNA at the 2'-O position of the ribose in the fully assembled 50S ribosomal subunit. The chain is Ribosomal RNA large subunit methyltransferase E from Blochmanniella pennsylvanica (strain BPEN).